Consider the following 300-residue polypeptide: Tyrosine recombinase XerC (300 aa).

The region spanning 2 to 88 (ENVNFTLNLF…SLRSFYKFLL (87 aa)) is the Core-binding (CB) domain. Residues 109–294 (KIPHFLYPDE…TKDHLRYVYL (186 aa)) form the Tyr recombinase domain. Active-site residues include arginine 149, lysine 173, histidine 246, arginine 249, and histidine 272. Tyrosine 281 acts as the O-(3'-phospho-DNA)-tyrosine intermediate in catalysis.

It belongs to the 'phage' integrase family. XerC subfamily. In terms of assembly, forms a cyclic heterotetrameric complex composed of two molecules of XerC and two molecules of XerD.

Its subcellular location is the cytoplasm. Functionally, site-specific tyrosine recombinase, which acts by catalyzing the cutting and rejoining of the recombining DNA molecules. The XerC-XerD complex is essential to convert dimers of the bacterial chromosome into monomers to permit their segregation at cell division. It also contributes to the segregational stability of plasmids. In Anoxybacillus flavithermus (strain DSM 21510 / WK1), this protein is Tyrosine recombinase XerC.